The primary structure comprises 133 residues: Snaclec purpureotin subunit alpha (133 aa).

Cystine bridges form between C2–C13, C30–C127, and C102–C119. A C-type lectin domain is found at 9-128 (FKQYCYQIIK…CEQKHIFMCK (120 aa)).

The protein belongs to the snaclec family. As to quaternary structure, homodimer (non-covalently linked) of heterodimer of alpha and beta subunits (disulfide-linked). In terms of tissue distribution, expressed by the venom gland.

It localises to the secreted. Functionally, snaclec that induces platelet aggregation without any cofactor in a dose-dependent manner. Its platelet aggregation effect is blocked by echicetin, suggesting it is a GPIb-binding protein which binds to the same or a closely related GPIb site on platelets as echicetin. The sequence is that of Snaclec purpureotin subunit alpha from Trimeresurus purpureomaculatus (Mangrove pit viper).